The sequence spans 171 residues: Cardioactive peptide (171 aa).

The signal sequence occupies residues 1-26 (MQMYHVVLGCSLAILLVILDIPQASC). Positions 27-49 (DDVVIQKRQVDPAEMDRLLDPKR) are excised as a propeptide. Cys-54 and Cys-60 are joined by a disulfide. Cys-60 carries the post-translational modification Cysteine amide. A propeptide spanning residues 64 to 171 (RSDESMGTLV…QEEITKPWSR (108 aa)) is cleaved from the precursor. The tract at residues 116 to 171 (QSNQFGAGMDRPLPLPIAGYRRKRFADPESQAPAPHSNLPRATSQLQEEITKPWSR) is disordered.

In terms of tissue distribution, central nervous system; most neurons exhibit coexpression with burs.

The protein resides in the secreted. Functionally, cardioregulatory neurohormone that increases heart beat rate during adult wing inflation; has no effect on beat amplitude. The effect of CCAP is both ino- and chronotropic. In Periplaneta americana (American cockroach), this protein is Cardioactive peptide.